The chain runs to 207 residues: Histidine biosynthesis bifunctional protein HisIE (207 aa).

A phosphoribosyl-AMP cyclohydrolase region spans residues 1–115; it reads MLSKKENLLK…FFLKENTLNF (115 aa). Residues 116 to 207 are phosphoribosyl-ATP pyrophosphohydrolase; the sequence is LSKLEDLIED…NLKKRKTEKL (92 aa).

The protein in the N-terminal section; belongs to the PRA-CH family. This sequence in the C-terminal section; belongs to the PRA-PH family.

The protein localises to the cytoplasm. It carries out the reaction 1-(5-phospho-beta-D-ribosyl)-ATP + H2O = 1-(5-phospho-beta-D-ribosyl)-5'-AMP + diphosphate + H(+). The enzyme catalyses 1-(5-phospho-beta-D-ribosyl)-5'-AMP + H2O = 1-(5-phospho-beta-D-ribosyl)-5-[(5-phospho-beta-D-ribosylamino)methylideneamino]imidazole-4-carboxamide. It functions in the pathway amino-acid biosynthesis; L-histidine biosynthesis; L-histidine from 5-phospho-alpha-D-ribose 1-diphosphate: step 2/9. It participates in amino-acid biosynthesis; L-histidine biosynthesis; L-histidine from 5-phospho-alpha-D-ribose 1-diphosphate: step 3/9. The chain is Histidine biosynthesis bifunctional protein HisIE (hisI) from Buchnera aphidicola subsp. Schizaphis graminum (strain Sg).